The following is a 218-amino-acid chain: Adenylate kinase (218 aa).

10-15 (GAGKGT) is an ATP binding site. Positions 30–59 (STGDMLRAAIAKGTPLGLSAQKIMESGGLV) are NMP. AMP-binding positions include threonine 31, arginine 36, 57–59 (GLV), 85–88 (GFPR), and glutamine 92. Positions 122–159 (GRRIHQPSGRVYHVVNQPPKNPGVDDITGEPLIQRDDD) are LID. ATP is bound by residues arginine 123 and 132–133 (VY). Residues arginine 156 and arginine 167 each contribute to the AMP site. Glycine 203 provides a ligand contact to ATP.

This sequence belongs to the adenylate kinase family. In terms of assembly, monomer.

Its subcellular location is the cytoplasm. It carries out the reaction AMP + ATP = 2 ADP. It participates in purine metabolism; AMP biosynthesis via salvage pathway; AMP from ADP: step 1/1. Functionally, catalyzes the reversible transfer of the terminal phosphate group between ATP and AMP. Plays an important role in cellular energy homeostasis and in adenine nucleotide metabolism. This chain is Adenylate kinase, found in Legionella pneumophila (strain Corby).